The following is a 597-amino-acid chain: Protein unc-93 homolog B1 (597 aa).

A disordered region spans residues 1 to 29 (MEAEPPLYPMAGAAGPQGDEDLLGVPDGP). A run of 5 helical transmembrane segments spans residues 64–84 (VLAA…LLQM), 110–130 (KMLM…PVLI), 132–152 (FFGT…FVST), 160–180 (TLVP…ASMG), and 223–243 (IFYS…IYFL). N-linked (GlcNAc...) asparagine glycosylation is found at N251 and N272. 5 helical membrane-spanning segments follow: residues 285-305 (LIVV…LVLG), 343-363 (LVPF…GIAL), 378-398 (LLVA…LGLW), 403-423 (VPLV…FFWA), and 428-448 (VLQH…GSAL). N-linked (GlcNAc...) asparagine glycosylation occurs at N449. 2 helical membrane passes run 469–489 (FIFT…YLGS) and 491–511 (LHMK…AVSY). The segment at 522-597 (VAPRQPRIPR…AQGGDGPEEQ (76 aa)) is disordered. A phosphoserine mark is found at S547 and S550.

The protein belongs to the unc-93 family. Interacts with TLR3, TLR5, TLR7, and TLR9 (probably via transmembrane domain). N-glycosylated. As to expression, expressed in plasmocytoid dendritic cells (at protein level). Highly expressed in antigen-presenting cells. Expressed in heart, and at lower level in kidney. Expressed at low level in other tissues.

Its subcellular location is the endoplasmic reticulum membrane. It localises to the endosome. The protein resides in the lysosome. It is found in the cytoplasmic vesicle. The protein localises to the phagosome. Its function is as follows. Plays an important role in innate and adaptive immunity by regulating nucleotide-sensing Toll-like receptor (TLR) signaling. Required for the transport of a subset of TLRs (including TLR3, TLR7 and TLR9) from the endoplasmic reticulum to endolysosomes where they can engage pathogen nucleotides and activate signaling cascades. May play a role in autoreactive B-cells removal. The polypeptide is Protein unc-93 homolog B1 (Homo sapiens (Human)).